A 460-amino-acid chain; its full sequence is uncharacterized protein (460 aa).

This is an uncharacterized protein from Haemophilus influenzae (strain ATCC 51907 / DSM 11121 / KW20 / Rd).